A 258-amino-acid chain; its full sequence is Acetylglutamate kinase (258 aa).

Substrate contacts are provided by residues 44 to 45, Arg66, and Asn158; that span reads GG. ATP contacts are provided by residues 181–186 and 209–211; these read DVSGIL and IIT.

Belongs to the acetylglutamate kinase family. ArgB subfamily. As to quaternary structure, homodimer.

Its subcellular location is the cytoplasm. It catalyses the reaction N-acetyl-L-glutamate + ATP = N-acetyl-L-glutamyl 5-phosphate + ADP. The protein operates within amino-acid biosynthesis; L-arginine biosynthesis; N(2)-acetyl-L-ornithine from L-glutamate: step 2/4. In terms of biological role, catalyzes the ATP-dependent phosphorylation of N-acetyl-L-glutamate. This Shigella sonnei (strain Ss046) protein is Acetylglutamate kinase.